The primary structure comprises 701 residues: Heterodisulfide reductase subunit A-like protein (701 aa).

152-175 (GGGIAGIFAALDIANAGYKVYLVE) provides a ligand contact to FAD. The 4Fe-4S ferredoxin-type 1 domain occupies 239–268 (KQTWVDWDLCTGCGACTDVCPPKARVPDEF). Residues C248, C251, C254, C326, C627, C630, C633, C637, C660, C663, C666, and C670 each contribute to the [4Fe-4S] cluster site. 2 consecutive 4Fe-4S ferredoxin-type domains span residues 618–647 (LVSE…MTKY) and 651–680 (MRAE…LHGF).

Belongs to the HdrA family. As to quaternary structure, the heterodisulfide reductase is composed of three subunits; HdlA, HdlB and HdlC. It forms a complex with the F420-non-reducing hydrogenase (Mvh), which provides the reducing equivalents to the heterodisulfide reductase. The cofactor is [4Fe-4S] cluster. FAD serves as cofactor.

Its subcellular location is the cytoplasm. In terms of biological role, has oxidoreductase activity. The Hdl and Mvh subunits may together mediate electron transfer from hydrogen to an unidentified electron acceptor on the cytoplasmic side of the membrane. In Archaeoglobus profundus (strain DSM 5631 / JCM 9629 / NBRC 100127 / Av18), this protein is Heterodisulfide reductase subunit A-like protein (hdlA).